The primary structure comprises 539 residues: Eukaryotic translation initiation factor 3 subunit L (539 aa).

The 209-residue stretch at 306-514 (TFSDILLYVQ…IHIADTKVSH (209 aa)) folds into the PCI domain.

The protein belongs to the eIF-3 subunit L family. As to quaternary structure, component of the eukaryotic translation initiation factor 3 (eIF-3) complex. The eIF-3 complex interacts with pix.

The protein localises to the cytoplasm. Functionally, component of the eukaryotic translation initiation factor 3 (eIF-3) complex, which is involved in protein synthesis of a specialized repertoire of mRNAs and, together with other initiation factors, stimulates binding of mRNA and methionyl-tRNAi to the 40S ribosome. The eIF-3 complex specifically targets and initiates translation of a subset of mRNAs involved in cell proliferation. The sequence is that of Eukaryotic translation initiation factor 3 subunit L from Drosophila willistoni (Fruit fly).